A 192-amino-acid chain; its full sequence is dTTP/UTP pyrophosphatase (192 aa).

Catalysis depends on Asp70, which acts as the Proton acceptor.

This sequence belongs to the Maf family. YhdE subfamily. A divalent metal cation serves as cofactor.

The protein localises to the cytoplasm. It catalyses the reaction dTTP + H2O = dTMP + diphosphate + H(+). The catalysed reaction is UTP + H2O = UMP + diphosphate + H(+). In terms of biological role, nucleoside triphosphate pyrophosphatase that hydrolyzes dTTP and UTP. May have a dual role in cell division arrest and in preventing the incorporation of modified nucleotides into cellular nucleic acids. The polypeptide is dTTP/UTP pyrophosphatase (Alkaliphilus oremlandii (strain OhILAs) (Clostridium oremlandii (strain OhILAs))).